Reading from the N-terminus, the 456-residue chain is Carnosine N-methyltransferase unmet (456 aa).

S-adenosyl-L-methionine is bound by residues Arg154, Gly195, Glu216, Asp282, Phe283, and Cys299. Residues Asp303, His334, and Tyr385 each coordinate carnosine. The span at Arg402–Glu418 shows a compositional bias: basic and acidic residues. Positions Arg402–Ser456 are disordered. Ser408 and Ser420 each carry phosphoserine. Residues Gln427–Gln438 are compositionally biased toward basic and acidic residues.

Belongs to the carnosine N-methyltransferase family. Associates with the GATOR2 complex; the interaction is probably direct and is inhibited by S-adenosyl-L-methionine binding. Associates with the GATOR1 complex; the interaction is probably indirect and mediated by the GATOR2 complex.

It catalyses the reaction carnosine + S-adenosyl-L-methionine = anserine + S-adenosyl-L-homocysteine + H(+). S-adenosyl-L-methionine-binding protein that acts as a sensor to signal methionine availability to the mTORC1 signaling pathway. Associates with the GATOR2 complex in the absence of methionine to inhibit mTORC1 signaling, but dissociates in the presence of the methionine derivative S-adenosyl-L-methionine; S-adenosyl-L-homocysteine binding does not induce dissociation. Required for mTORC1 pathway response to methionine starvation. Exerts a protective function on developing egg chambers by inhibiting mTORC1 signaling under starvation conditions. May also function as a N-methyltransferase that mediates the formation of anserine (beta-alanyl-N(Pi)-methyl-L-histidine) from carnosine. It is unclear whether this protein has retained N-methyltransferase activity or if it is an evolutionary intermediate whose substrate binding ability has been co-opted to function as a nutrient sensor for mTORC1 signaling. This is Carnosine N-methyltransferase unmet from Drosophila melanogaster (Fruit fly).